The chain runs to 208 residues: Protein-L-isoaspartate O-methyltransferase (208 aa).

Residue Ser-59 is part of the active site.

It belongs to the methyltransferase superfamily. L-isoaspartyl/D-aspartyl protein methyltransferase family.

Its subcellular location is the cytoplasm. The enzyme catalyses [protein]-L-isoaspartate + S-adenosyl-L-methionine = [protein]-L-isoaspartate alpha-methyl ester + S-adenosyl-L-homocysteine. Its function is as follows. Catalyzes the methyl esterification of L-isoaspartyl residues in peptides and proteins that result from spontaneous decomposition of normal L-aspartyl and L-asparaginyl residues. It plays a role in the repair and/or degradation of damaged proteins. This is Protein-L-isoaspartate O-methyltransferase from Escherichia coli O1:K1 / APEC.